Here is a 414-residue protein sequence, read N- to C-terminus: Serine/arginine (SR)-type shuttling mRNA binding protein NPL3 (414 aa).

The segment covering 1-11 (MSEAQETHVEQ) has biased composition (basic and acidic residues). The disordered stretch occupies residues 1-119 (MSEAQETHVE…GRPPMHHRQE (119 aa)). Serine 15 is modified (phosphoserine). Positions 33 to 51 (DAPQEPQVPQESAPQESAP) are enriched in low complexity. Residues 52–68 (QEPPAPQEQNDVPPPSN) show a composition bias toward pro residues. Basic and acidic residues predominate over residues 75-92 (EESHSVQDYQEAHQHHQP). At serine 79 the chain carries Phosphoserine. The segment covering 93-105 (PEPQPYYPPPPPG) has biased composition (pro residues). RRM domains lie at 125–195 (TRLF…YSKL) and 200–275 (YRIT…RDDN). Serine 182, serine 212, and serine 224 each carry phosphoserine. The tract at residues 269 to 299 (TVERDDNPPPIRRSNRGGFRGRGGFRGGFRG) is disordered. Residues 286–299 (GFRGRGGFRGGFRG) are compositionally biased toward gly residues. A dimethylated arginine mark is found at arginine 288, arginine 290, arginine 294, and arginine 298. Arginine 302 bears the Omega-N-methylarginine mark. Dimethylated arginine; alternate is present on residues arginine 307 and arginine 314. Omega-N-methylarginine; alternate is present on residues arginine 307 and arginine 314. Residues arginine 321, arginine 329, arginine 337, and arginine 344 each carry the omega-N-methylarginine modification. The disordered stretch occupies residues 343-414 (SRGGYDSPRG…DAPRERSPTR (72 aa)). The span at 346-360 (GYDSPRGGYDSPRGG) shows a compositional bias: low complexity. Position 351 is a dimethylated arginine; alternate (arginine 351). Arginine 351 carries the post-translational modification Omega-N-methylarginine; alternate. Serine 356 is subject to Phosphoserine. 4 positions are modified to dimethylated arginine; alternate: arginine 358, arginine 363, arginine 377, and arginine 384. An omega-N-methylarginine; alternate mark is found at arginine 358, arginine 363, arginine 377, and arginine 384. Positions 379 to 389 (SYGGSRGGYDG) are enriched in gly residues. At arginine 391 the chain carries Omega-N-methylarginine. The span at 399–414 (DAYRTRDAPRERSPTR) shows a compositional bias: basic and acidic residues.

The protein belongs to the RRM GAR family. In terms of assembly, interacts with RRP6. In terms of processing, methylated by HMT1. The methylation is required for nuclear export.

The protein resides in the cytoplasm. Its subcellular location is the nucleus. The protein localises to the stress granule. Functionally, involved in mRNA processing and export. Required for efficient splicing of a large set of pre-mRNAs by efficient co-transcriptional recruitment of the splicing machinery. Remains associated with the mRNP during early steps of translation elongation. This chain is Serine/arginine (SR)-type shuttling mRNA binding protein NPL3, found in Saccharomyces cerevisiae (strain ATCC 204508 / S288c) (Baker's yeast).